A 212-amino-acid chain; its full sequence is Imidazole glycerol phosphate synthase subunit HisH (212 aa).

One can recognise a Glutamine amidotransferase type-1 domain in the interval 1 to 212 (MLAILDYKAG…YEYCKEVSDA (212 aa)). The active-site Nucleophile is the C79. Residues H187 and E189 contribute to the active site.

Heterodimer of HisH and HisF.

It localises to the cytoplasm. The catalysed reaction is 5-[(5-phospho-1-deoxy-D-ribulos-1-ylimino)methylamino]-1-(5-phospho-beta-D-ribosyl)imidazole-4-carboxamide + L-glutamine = D-erythro-1-(imidazol-4-yl)glycerol 3-phosphate + 5-amino-1-(5-phospho-beta-D-ribosyl)imidazole-4-carboxamide + L-glutamate + H(+). It carries out the reaction L-glutamine + H2O = L-glutamate + NH4(+). The protein operates within amino-acid biosynthesis; L-histidine biosynthesis; L-histidine from 5-phospho-alpha-D-ribose 1-diphosphate: step 5/9. Its function is as follows. IGPS catalyzes the conversion of PRFAR and glutamine to IGP, AICAR and glutamate. The HisH subunit catalyzes the hydrolysis of glutamine to glutamate and ammonia as part of the synthesis of IGP and AICAR. The resulting ammonia molecule is channeled to the active site of HisF. The chain is Imidazole glycerol phosphate synthase subunit HisH from Maridesulfovibrio salexigens (strain ATCC 14822 / DSM 2638 / NCIMB 8403 / VKM B-1763) (Desulfovibrio salexigens).